Consider the following 345-residue polypeptide: Phosphoribosylformylglycinamidine cyclo-ligase (345 aa).

Belongs to the AIR synthase family.

The protein localises to the cytoplasm. The catalysed reaction is 2-formamido-N(1)-(5-O-phospho-beta-D-ribosyl)acetamidine + ATP = 5-amino-1-(5-phospho-beta-D-ribosyl)imidazole + ADP + phosphate + H(+). It participates in purine metabolism; IMP biosynthesis via de novo pathway; 5-amino-1-(5-phospho-D-ribosyl)imidazole from N(2)-formyl-N(1)-(5-phospho-D-ribosyl)glycinamide: step 2/2. This Shewanella amazonensis (strain ATCC BAA-1098 / SB2B) protein is Phosphoribosylformylglycinamidine cyclo-ligase.